A 589-amino-acid polypeptide reads, in one-letter code: Probable galacturonosyltransferase 6 (589 aa).

At 1-6 (MKQIRR) the chain is on the cytoplasmic side. A helical; Signal-anchor for type II membrane protein membrane pass occupies residues 7–27 (WQRILILALLSISVFAPLIFV). The Lumenal segment spans residues 28–589 (SNRLKSITPV…TYLQQCNLQA (562 aa)). N83 and N126 each carry an N-linked (GlcNAc...) asparagine glycan. A disordered region spans residues 127-151 (KTDFKPPLSKGEKNTRVQPDRATDV). The segment covering 136 to 151 (KGEKNTRVQPDRATDV) has biased composition (basic and acidic residues). N317 and N454 each carry an N-linked (GlcNAc...) asparagine glycan.

The protein belongs to the glycosyltransferase 8 family. As to expression, expressed in roots, inflorescences, siliques, leaves and stems.

The protein resides in the golgi apparatus membrane. Its pathway is glycan metabolism; pectin biosynthesis. In terms of biological role, probably involved in pectin biosynthesis in cell walls. The polypeptide is Probable galacturonosyltransferase 6 (GAUT6) (Arabidopsis thaliana (Mouse-ear cress)).